Reading from the N-terminus, the 1708-residue chain is MTGAPPYNPQSPTQQPRFPVYSPPNKNRSYYPNNDQYQQHPPQTPPAFAPQPSLSRSPHYSHAPSPLPATLPPLNGGAPPPGHHSEPSSQYQAHSSAGTPQFSLPRPYSASMMSSNGASPYNHSTSSHAHPSARLESLSQSPPKKETEPLYPIGGNGAPGYSSSMMREPRPASPPRETKHARAADPMSFASILSGPTEESSPKKQPSLPEALPAPATTITPPPPALAPVPARRRLTPPPVTHGLPPTSQLKVKEPEPISPAALPRLEKKPGAEKRRRNAEQEPKSAEALPVASANGAFEPTKAARVSNRKTLTERDAETINKIIAEIDNADKSDVESPGFEAEYDGYIVKSKKRALDAEKAEGIRRKRRRHDFLVKLGKTFEKQANAGVDRFRAANEASVIAEVQAKEIQDEKERKKDMQRKRRRENTVRLEMQKKLEAERKANKANDAAEKAKFLREAERAQRKIKSTKRALEGVTSPEEIGEVTPLAPNLEGGTTSSFHIGRSSPSRRKSGRSGTSRPKKSKEQKQAEKDAAEAAYAAMENDEPLPLAPKEDPRKETLKKEAKGARSKEPTPSPVSTFESKGYNQIYEQIWRDIARKDIPKVYRIKTLSLSTRQENLRKTAQLASKQSRKWQERTNKSMKDTQARAKRTMREMMSFWKRNEREERDLRRLAEKQEIESAKKAEAEREANRQKRKLNFLISQTELYSHFIGRKIKGAGADSSGDTAVDGSDETIQPGKADHTIDLPPSVADVGTKVTNFEDLDFDAEDETALRQAAMANAQNAVKEAQERARAFNAEENPMAALDEGELNFQNPTSLGDIEISQPKMLTAKLKEYQLKGLNWLVNLYEQGINGILADEMGLGKTIQSISVMAYLAEVHNIWGPFLVIAPASTLHNWQQEITKFVPDIKVLPYWGSAKDRKVLRKFWDRKHITYTKESEFHVLVTSYQLVVLDSQYFQKVKWQYMILDEAQAIKSSQSSRWKNLLGFHCRNRLLLTGTPIQNNMQELWALLHFIMPTLFDSHDEFSEWFSKDIESHAQSNTKLNEDQLRRLHMILKPFMLRRVKKHVQQELGDKVEKDVFCDLTYRQRAYYANLRNRVSIMDLIEKAAVGDEADSTTLMNLVMQFRKVCNHPDLFERAETKSPFSVGYFAETASFVREGQNVDVRYSTRNLIEYSLPRLLCSSSGRVDMAGPGNEQAGFRGKYLQHLMNIFTPENIKRSIDEDGGFSFLRFADTSINEAYEQSHLGVFERAVRRRGQSNRLSRLNVIYDDEEDEQTSKSVLPHSLFNIVQRNDRQAVRNVTVEGYMRDLMNVSEVTFEREGLDVIEPSASPAASAPPITISCSGQVALRETQDSFFNVSVRHALFSTPSRQMEQQILEKKLDPAPFSLPPMLPKPISTKGRYTHIEVPSMRRFVTDSGKLAKLDELLRELKAGGHRVLLYFQMTRMIDLMEEYLTYRNYKYCRLDGSTKLEDRRDTVADFQQRPEIFVFLLSTRAGGLGINLTAADTVIFYDSDWNPTIDSQAMDRAHRLGQTRQVTVYRLITRGTIEERIRKRALQKEEVQRVVISGGAAGGVDFNTRNRESRTKDIAMWLADDEQAELIEQKEKEALDRGEVFGAGKGGKKAAQKRKKDLTLDDMYHEGEGNFDDISAKPSGAATPVSTADNFGTPSSTPVPKRGRGRGTGKGSSKRAKTTTERLRLIDGDGGLES.

Disordered regions lie at residues 1 to 312 (MTGA…RKTL), 410 to 584 (QDEK…ESKG), 626 to 648 (ASKQSRKWQERTNKSMKDTQARA), and 718 to 750 (AGADSSGDTAVDGSDETIQPGKADHTIDLPPSV). 3 stretches are compositionally biased toward polar residues: residues 24-37 (PNKNRSYYPNNDQY), 87-102 (PSSQYQAHSSAGTPQF), and 111-129 (SMMSSNGASPYNHSTSSHA). Residues 206–219 (PSLPEALPAPATTI) are compositionally biased toward low complexity. 2 stretches are compositionally biased toward basic and acidic residues: residues 265–285 (RLEKKPGAEKRRRNAEQEPKS) and 426–463 (ENTVRLEMQKKLEAERKANKANDAAEKAKFLREAERAQ). Positions 395–478 (ANEASVIAEV…TKRALEGVTS (84 aa)) form a coiled coil. Residues 507–522 (PSRRKSGRSGTSRPKK) are compositionally biased toward basic residues. 3 stretches are compositionally biased toward basic and acidic residues: residues 523 to 534 (SKEQKQAEKDAA), 551 to 571 (PKEDPRKETLKKEAKGARSKE), and 632 to 646 (KWQERTNKSMKDTQA). A DBINO domain is found at 592–717 (IWRDIARKDI…SHFIGRKIKG (126 aa)). Residues 634–706 (QERTNKSMKD…LNFLISQTEL (73 aa)) adopt a coiled-coil conformation. In terms of domain architecture, Helicase ATP-binding spans 845 to 1017 (VNLYEQGING…WALLHFIMPT (173 aa)). 858-865 (DEMGLGKT) provides a ligand contact to ATP. The DEAQ box motif lies at 968–971 (DEAQ). One can recognise a Helicase C-terminal domain in the interval 1422 to 1582 (KLDELLRELK…GVDFNTRNRE (161 aa)). Positions 1643–1708 (GNFDDISAKP…LIDGDGGLES (66 aa)) are disordered. The span at 1658 to 1672 (PVSTADNFGTPSSTP) shows a compositional bias: polar residues. Basic residues predominate over residues 1675 to 1691 (KRGRGRGTGKGSSKRAK). Positions 1692 to 1701 (TTTERLRLID) are enriched in basic and acidic residues.

It belongs to the SNF2/RAD54 helicase family. Component of the INO80 chromatin-remodeling complex.

The protein localises to the nucleus. It catalyses the reaction ATP + H2O = ADP + phosphate + H(+). Its function is as follows. ATPase component of the INO80 complex which remodels chromatin by shifting nucleosomes and is involved in DNA repair. This chain is Chromatin-remodeling ATPase INO80 (ino80), found in Neosartorya fischeri (strain ATCC 1020 / DSM 3700 / CBS 544.65 / FGSC A1164 / JCM 1740 / NRRL 181 / WB 181) (Aspergillus fischerianus).